The primary structure comprises 595 residues: Elongation factor 4 (595 aa).

The 182-residue stretch at 2-183 (KNIRNFCIIA…TIVEKVPAPK (182 aa)) folds into the tr-type G domain. GTP-binding positions include 14–19 (DHGKST) and 130–133 (NKID).

It belongs to the TRAFAC class translation factor GTPase superfamily. Classic translation factor GTPase family. LepA subfamily.

The protein resides in the cell inner membrane. The enzyme catalyses GTP + H2O = GDP + phosphate + H(+). Functionally, required for accurate and efficient protein synthesis under certain stress conditions. May act as a fidelity factor of the translation reaction, by catalyzing a one-codon backward translocation of tRNAs on improperly translocated ribosomes. Back-translocation proceeds from a post-translocation (POST) complex to a pre-translocation (PRE) complex, thus giving elongation factor G a second chance to translocate the tRNAs correctly. Binds to ribosomes in a GTP-dependent manner. The protein is Elongation factor 4 of Parabacteroides distasonis (strain ATCC 8503 / DSM 20701 / CIP 104284 / JCM 5825 / NCTC 11152).